The primary structure comprises 203 residues: Outer-membrane lipoprotein LolB (203 aa).

The signal sequence occupies residues 1 to 16 (MKTFLPCLFFLLILVG). Cys-17 carries the N-palmitoyl cysteine lipid modification. Cys-17 carries the S-diacylglycerol cysteine lipid modification.

Belongs to the LolB family. Monomer.

It is found in the cell outer membrane. Plays a critical role in the incorporation of lipoproteins in the outer membrane after they are released by the LolA protein. The sequence is that of Outer-membrane lipoprotein LolB from Psychromonas ingrahamii (strain DSM 17664 / CCUG 51855 / 37).